A 273-amino-acid chain; its full sequence is MGQKVTGGIKTVDMRDPTYRPLKQELQGLDYCKPTRLDLLLDMPPVSYDVQLLHSWNNNDRSLNVFVKEDDKLIFHRHPVAQSTDAIRGKVGYTRGLHVWQITWAMRQRGTHAVVGVATADAPLHSVGYTTLVGNNHESWGWDLGRNRLYHDGKNQPSKTYPAFLEPDETFIVPDSFLVALDMDDGTLSFIVDGQYMGVAFRGLKGKKLYPVVSAVWGHCEIRMRYLNGLDPEPLPLMDLCRRSVRLALGRERLGEIHTLPLPASLKAYLLYQ.

Tyr31 carries the post-translational modification Phosphotyrosine; by MET. In terms of domain architecture, B30.2/SPRY spans 33–231 (KPTRLDLLLD…IRMRYLNGLD (199 aa)). The 42-residue stretch at 232–273 (PEPLPLMDLCRRSVRLALGRERLGEIHTLPLPASLKAYLLYQ) folds into the SOCS box domain.

It belongs to the SPSB family. As to quaternary structure, component of the probable ECS(SPSB1) E3 ubiquitin-protein ligase complex which contains CUL5, RNF7/RBX2, Elongin BC complex and SPSB1. Interacts with CUL5, RNF7, ELOB and ELOC. Directly interacts with MET tyrosine kinase domain in the presence and in the absence of HGF, however HGF treatment has a positive effect on this interaction. When phosphorylated, interacts with RASA1 without affecting its stability. Interacts (via B30.2/SPRY domain) with PAWR; this interaction is direct and occurs in association with the Elongin BC complex. Interacts with NOS2. Interacts with EPHB2.

It localises to the cytoplasm. The protein resides in the cytosol. The protein operates within protein modification; protein ubiquitination. In terms of biological role, substrate recognition component of a SCF-like ECS (Elongin BC-CUL2/5-SOCS-box protein) E3 ubiquitin-protein ligase complex which mediates the ubiquitination and subsequent proteasomal degradation of target proteins. Negatively regulates nitric oxide (NO) production and limits cellular toxicity in activated macrophages by mediating the ubiquitination and proteasomal degradation of NOS2. Acts as a bridge which links NOS2 with the ECS E3 ubiquitin ligase complex components ELOC and CUL5. In Homo sapiens (Human), this protein is SPRY domain-containing SOCS box protein 1 (SPSB1).